Consider the following 145-residue polypeptide: uncharacterized protein (145 aa).

2 consecutive transmembrane segments (helical) span residues 20-40 (LIGPFLFAIIYWSIFIEGMFF) and 116-136 (MIMLLYAEIIIYSSFSCVLSA).

The protein resides in the membrane. This is an uncharacterized protein from Saccharomyces cerevisiae (strain ATCC 204508 / S288c) (Baker's yeast).